Consider the following 359-residue polypeptide: Protein-glutamate methylesterase/protein-glutamine glutaminase 1 (359 aa).

The Response regulatory domain occupies 4-121; the sequence is SVLIVDDSAV…RAFLLEAAKE (118 aa). A 4-aspartylphosphate modification is found at D55. The CheB-type methylesterase domain maps to 169 to 354; that stretch reads YRTTEKIIAI…MSLERIAHML (186 aa). Residues S181, H207, and D303 contribute to the active site.

The protein belongs to the CheB family. In terms of processing, phosphorylated by CheA. Phosphorylation of the N-terminal regulatory domain activates the methylesterase activity.

The protein resides in the cytoplasm. It carries out the reaction [protein]-L-glutamate 5-O-methyl ester + H2O = L-glutamyl-[protein] + methanol + H(+). The catalysed reaction is L-glutaminyl-[protein] + H2O = L-glutamyl-[protein] + NH4(+). Functionally, involved in chemotaxis. Part of a chemotaxis signal transduction system that modulates chemotaxis in response to various stimuli. Catalyzes the demethylation of specific methylglutamate residues introduced into the chemoreceptors (methyl-accepting chemotaxis proteins or MCP) by CheR. Also mediates the irreversible deamidation of specific glutamine residues to glutamic acid. This Chromobacterium violaceum (strain ATCC 12472 / DSM 30191 / JCM 1249 / CCUG 213 / NBRC 12614 / NCIMB 9131 / NCTC 9757 / MK) protein is Protein-glutamate methylesterase/protein-glutamine glutaminase 1.